A 391-amino-acid chain; its full sequence is UDP-galactose transporter homolog 1 (391 aa).

5 helical membrane-spanning segments follow: residues 3–23 (LLQLGVCAGSIYTTFLIWGLL), 52–72 (LFLNTVQALFSSVVACMYLLV), 126–147 (YILIAALQSTASQLGFLSLRYI), 178–198 (YKYAVVGLVTLGIWLFMAFAP), and 207–227 (APESSSLIGLVLCLLNLVLDG). N-linked (GlcNAc...) asparagine glycosylation occurs at Asn230. 4 consecutive transmembrane segments (helical) span residues 250–270 (MMLVMNAISAFLMALTLTLPI), 298–318 (DIIAYALAGAVGQVSIFETLE), 323–343 (LTLVSITVTRKLFTMLLSVVV), and 347–367 (ELSKLQWLGVAVVFAGIGIEA).

Belongs to the nucleotide-sugar transporter family. SLC35B subfamily.

The protein localises to the endoplasmic reticulum membrane. In terms of biological role, may be involved in specific transport of UDP-Gal from the cytosol to the Golgi lumen. Involved in the maintenance of optimal conditions for the folding of secretory pathway proteins in the endoplasmic reticulum. This Mycosarcoma maydis (Corn smut fungus) protein is UDP-galactose transporter homolog 1 (HUT1).